A 384-amino-acid polypeptide reads, in one-letter code: Glucans biosynthesis protein C (384 aa).

The next 10 membrane-spanning stretches (helical) occupy residues 17–37, 54–74, 91–111, 140–160, 173–193, 212–232, 240–260, 274–294, 311–331, and 338–358; these read AWLM…THSW, FIHA…SYML, VGIP…ILLQ, LWFL…FTWF, AISL…YAAI, FIVM…LAFI, FTTP…AYLL, TESV…FSLG, ASLF…AYIT, and LIGF…LYEI.

This sequence belongs to the acyltransferase 3 family. OpgC subfamily.

The protein localises to the cell membrane. It functions in the pathway glycan metabolism; osmoregulated periplasmic glucan (OPG) biosynthesis. Functionally, necessary for the succinyl substitution of periplasmic glucans. Could catalyze the transfer of succinyl residues from the cytoplasmic side of the membrane to the nascent glucan backbones on the periplasmic side of the membrane. The sequence is that of Glucans biosynthesis protein C from Salmonella schwarzengrund (strain CVM19633).